A 437-amino-acid polypeptide reads, in one-letter code: Chaperone SurA (437 aa).

The first 22 residues, 1 to 22 (MKNWKFPLISTLLLLLTINVHA), serve as a signal peptide directing secretion. PpiC domains follow at residues 173–274 (TVQY…KIDD) and 283–383 (VTEV…EVLE).

It is found in the periplasm. The enzyme catalyses [protein]-peptidylproline (omega=180) = [protein]-peptidylproline (omega=0). In terms of biological role, chaperone involved in the correct folding and assembly of outer membrane proteins. Recognizes specific patterns of aromatic residues and the orientation of their side chains, which are found more frequently in integral outer membrane proteins. May act in both early periplasmic and late outer membrane-associated steps of protein maturation. In Aliivibrio fischeri (strain ATCC 700601 / ES114) (Vibrio fischeri), this protein is Chaperone SurA.